Consider the following 160-residue polypeptide: Putative lipoprotein YfiB (160 aa).

Positions 1-18 (MIKHLVAPLVFTSLILTG) are cleaved as a signal peptide. Cysteine 19 is lipidated: N-palmitoyl cysteine. Cysteine 19 carries the S-diacylglycerol cysteine lipid modification. The OmpA-like domain maps to 43-160 (AGDWSLGLSD…RRVAVVITTP (118 aa)).

It belongs to the outer membrane OOP (TC 1.B.6) superfamily.

The protein resides in the cell membrane. This is Putative lipoprotein YfiB (yfiB) from Escherichia coli (strain K12).